The primary structure comprises 354 residues: Phospho-N-acetylmuramoyl-pentapeptide-transferase (354 aa).

10 helical membrane passes run 23–43 (FSFFIAFCLTVYLMPKFIAWA), 66–86 (TPTMGGLVFIGAAVFATLLCA), 88–108 (LDNVFVVASLLCLVGFSALGF), 130–150 (LAVQVLIGLVVSSLLYFHGEL), 161–181 (FALLDLGVFAIVFWTIVIVAA), 193–213 (GLASVPAIFSLLTLGVFAYIC), 230–250 (VGETVIIAAALIGSLMGFLWF), 257–277 (VFMGDSGSLSVGAYIGLMGVM), 282–302 (ILLIIIGFVFVMETLSVILQV), and 331–351 (KIIVRFWLIAILANLIALTAL).

Belongs to the glycosyltransferase 4 family. MraY subfamily. The cofactor is Mg(2+).

The protein resides in the cell inner membrane. It catalyses the reaction UDP-N-acetyl-alpha-D-muramoyl-L-alanyl-gamma-D-glutamyl-meso-2,6-diaminopimeloyl-D-alanyl-D-alanine + di-trans,octa-cis-undecaprenyl phosphate = di-trans,octa-cis-undecaprenyl diphospho-N-acetyl-alpha-D-muramoyl-L-alanyl-D-glutamyl-meso-2,6-diaminopimeloyl-D-alanyl-D-alanine + UMP. It functions in the pathway cell wall biogenesis; peptidoglycan biosynthesis. Its function is as follows. Catalyzes the initial step of the lipid cycle reactions in the biosynthesis of the cell wall peptidoglycan: transfers peptidoglycan precursor phospho-MurNAc-pentapeptide from UDP-MurNAc-pentapeptide onto the lipid carrier undecaprenyl phosphate, yielding undecaprenyl-pyrophosphoryl-MurNAc-pentapeptide, known as lipid I. This is Phospho-N-acetylmuramoyl-pentapeptide-transferase from Campylobacter curvus (strain 525.92).